The primary structure comprises 1135 residues: Envelopment polyprotein (1135 aa).

Residues 1 to 18 (MGIWKWLVMASLVWPVLT) form the signal peptide. Topologically, residues 19 to 485 (LRNVYDMKIE…VPGFHGWATA (467 aa)) are lumenal. Intrachain disulfides connect Cys29/Cys151, Cys63/Cys157, Cys109/Cys128, Cys133/Cys138, Cys175/Cys185, Cys210/Cys247, Cys234/Cys351, Cys376/Cys435, Cys380/Cys389, Cys405/Cys424, and Cys452/Cys475. A glycan (N-linked (GlcNAc...) asparagine; by host) is linked at Asn134. Asn235 and Asn347 each carry an N-linked (GlcNAc...) asparagine; by host glycan. Asn399 carries an N-linked (GlcNAc...) asparagine; by host glycan. A helical transmembrane segment spans residues 486–506 (ALLVTFCFGWVLIPAITFIIL). Over 507–627 (TILKFIANIF…LNLFRYKSRC (121 aa)) the chain is Cytoplasmic. The segment at 516-533 (FHTSNQENRLKSVLRKIK) is binding to the ribonucleoprotein. 2 CCHC-type zinc fingers span residues 545-565 (CDVC…GVSC) and 570-591 (CPYC…YKVC). 3 binding to the ribonucleoprotein regions span residues 588-605 (YKVC…KKTV), 592-603 (QVTHRFRDDLKK), and 611-625 (TPGC…RYKS). Residues 611–634 (TPGCYRTLNLFRYKSRCYIFTMWI) enclose the ITAM domain. Residues 615 to 618 (YRTL) carry the YxxL motif. Residues 628–648 (YIFTMWIFLLVLESILWAASA) traverse the membrane as a helical segment. Topologically, residues 649 to 1105 (SETPLTPVWN…EWISGIFSGN (457 aa)) are lumenal. Intrachain disulfides connect Cys735–Cys770, Cys739–Cys777, Cys751–Cys885, Cys765–Cys896, Cys780–Cys904, Cys806–Cys815, Cys823–Cys832, and Cys863–Cys867. Positions 757-777 (YQYETSWGCNPSDCPGVGTGC) are fusion loop. Asn928 carries N-linked (GlcNAc...) asparagine; by host glycosylation. Disulfide bonds link Cys970–Cys1000, Cys993–Cys1045, Cys1010–Cys1015, Cys1046–Cys1051, and Cys1085–Cys1089. Residues 1106-1126 (WIVLIVLCVFLLFSLVLLSIL) traverse the membrane as a helical segment. A binding to the ribonucleoprotein region spans residues 1122–1135 (LLSILCPVRKHKKS). Residues 1127–1135 (CPVRKHKKS) lie on the Cytoplasmic side of the membrane.

It belongs to the hantavirus envelope glycoprotein family. As to quaternary structure, homodimer. Homotetramer; forms heterotetrameric Gn-Gc spikes in the pre-fusion conformation. Interacts (via C-terminus) with the nucleoprotein. Interacts with host TUFM; this interaction contributes to the virus-induced degradation of mitochondria by autophagy, which leads to degradation of host MAVS and inhibition of type I interferon (IFN) responses. Interacts with host MAP1LC3B; this interaction contributes to the virus-induced degradation of mitochondria by autophagy, which leads to degradation of host MAVS and inhibition of type I interferon (IFN) responses. Homodimer. Homotetramer; forms heterotetrameric Gn-Gc spikes in the pre-fusion conformation. Homotrimer; forms homotrimer in the post-fusion conformation at acidic pH. Interacts (via C-terminus) with the nucleoprotein. Envelope polyprotein precursor is quickly cleaved in vivo just after synthesis, presumably by host signal peptidase.

It localises to the virion membrane. Its subcellular location is the host cell surface. It is found in the host Golgi apparatus membrane. The protein resides in the host endoplasmic reticulum membrane. The protein localises to the host mitochondrion. Its function is as follows. Forms homotetramers with glycoprotein C at the surface of the virion. Attaches the virion to host cell receptors including integrin ITGAV/ITGB3. This attachment induces virion internalization predominantly through clathrin-dependent endocytosis. May also bind to host C1QBP for virus entry into the host cell. Mediates the assembly and budding of infectious virus particles through its interaction with the nucleocapsid protein and the viral genome. May dysregulate normal immune and endothelial cell responses through an ITAM motif. Translocates to mitochondria, binds to host TUFM and recruits MAP1LC3B. These interactions induce mitochondrial autophagy and therefore destruction of host MAVS leading to inhibition of type I interferon (IFN) responses. Concomitant breakdown of glycoprotein N is apparently prevented by the nucleoprotein that may inhibit Gn-stimulated autophagosome-lysosome fusion. Interacts with the viral genomic RNA. Forms homotetramers with glycoprotein N at the surface of the virion. Attaches the virion to host cell receptors including integrin ITGAV/ITGB3. This attachment induces virion internalization predominantly through clathrin-dependent endocytosis. May also bind to host C1QBP for virus entry into the host cell. Class II fusion protein that promotes fusion of viral membrane with host endosomal membrane after endocytosis of the virion. The protein is Envelopment polyprotein (GP) of Hantaan virus (strain Lee) (Lee virus).